The primary structure comprises 831 residues: uncharacterized protein (831 aa).

Residues 1-146 (MDIFDSTITS…RAFSILSGVA (146 aa)) enclose the CID domain. Disordered stretches follow at residues 205–233 (SSSS…SSIS), 265–354 (KEHF…NYNN), 434–480 (IGNS…NEDS), and 572–831 (CGAD…SNRH). 2 stretches are compositionally biased toward low complexity: residues 272–354 (NDTS…NYNN) and 434–477 (IGNS…NNNN). Composition is skewed to basic and acidic residues over residues 592–601 (NENKQNDSHR) and 611–813 (SRGE…RSKE). A compositionally biased stretch (low complexity) spans 817 to 831 (NNDNRSSSNRSSNRH).

This is an uncharacterized protein from Dictyostelium discoideum (Social amoeba).